Consider the following 280-residue polypeptide: MTWKIVTDSGCDLRSLTRQSKELRFERVPLTLQIGTEIFRDDDGLDIDNMMTTMYQSSKATTSSCPSPEAFLQAYRGADNVIVMTITGTLSGSHNSARLAKNELLEENPNVNIHLIDSLSAGGEMDLLVLELERLINLGLSFEEVVKQITAYQQKTRLIFVLAKVDNLVKNGRLSKLVGKVIGLLNIRMVGKASNKGTLELLQKARGQKKAVSALIEEIQKEGYVGGKVYIAHAQNPKICEQISEKIKSLYPDAVIQTGRTSGLCSFYAEDGGLLMGYEI.

A DegV domain is found at 3–280 (WKIVTDSGCD…DGGLLMGYEI (278 aa)). Hexadecanoate is bound by residues S63 and S91.

May bind long-chain fatty acids, such as palmitate, and may play a role in lipid transport or fatty acid metabolism. In Streptococcus pyogenes serotype M6 (strain ATCC BAA-946 / MGAS10394), this protein is DegV domain-containing protein M6_Spy1440.